The primary structure comprises 350 residues: UDP-N-acetylenolpyruvoylglucosamine reductase (350 aa).

The 172-residue stretch at 24–195 (HVDATARWLL…VAVEFNLPLL (172 aa)) folds into the FAD-binding PCMH-type domain. The active site involves Arg172. The active-site Proton donor is the Ser245. Glu342 is a catalytic residue.

This sequence belongs to the MurB family. The cofactor is FAD.

The protein resides in the cytoplasm. The catalysed reaction is UDP-N-acetyl-alpha-D-muramate + NADP(+) = UDP-N-acetyl-3-O-(1-carboxyvinyl)-alpha-D-glucosamine + NADPH + H(+). It participates in cell wall biogenesis; peptidoglycan biosynthesis. Its function is as follows. Cell wall formation. This is UDP-N-acetylenolpyruvoylglucosamine reductase from Xanthomonas campestris pv. campestris (strain B100).